The following is a 578-amino-acid chain: NADH-quinone oxidoreductase subunit C/D (578 aa).

The segment at 1–167 (MILSLFKLFG…DEFYFTKQKE (167 aa)) is NADH dehydrogenase I subunit C. The NADH dehydrogenase I subunit D stretch occupies residues 192–578 (EYMFLNFGPN…IDFVMSDVDR (387 aa)).

In the N-terminal section; belongs to the complex I 30 kDa subunit family. This sequence in the C-terminal section; belongs to the complex I 49 kDa subunit family. As to quaternary structure, NDH-1 is composed of 13 different subunits. Subunits NuoB, CD, E, F, and G constitute the peripheral sector of the complex.

It localises to the cell inner membrane. It carries out the reaction a quinone + NADH + 5 H(+)(in) = a quinol + NAD(+) + 4 H(+)(out). NDH-1 shuttles electrons from NADH, via FMN and iron-sulfur (Fe-S) centers, to quinones in the respiratory chain. The immediate electron acceptor for the enzyme in this species is believed to be ubiquinone. Couples the redox reaction to proton translocation (for every two electrons transferred, four hydrogen ions are translocated across the cytoplasmic membrane), and thus conserves the redox energy in a proton gradient. This chain is NADH-quinone oxidoreductase subunit C/D, found in Buchnera aphidicola subsp. Cinara cedri (strain Cc).